Here is a 232-residue protein sequence, read N- to C-terminus: Phosphatidylserine decarboxylase proenzyme (232 aa).

Ser-190 serves as the catalytic Schiff-base intermediate with substrate; via pyruvic acid. Ser-190 is modified (pyruvic acid (Ser); by autocatalysis).

Belongs to the phosphatidylserine decarboxylase family. PSD-A subfamily. Heterodimer of a large membrane-associated beta subunit and a small pyruvoyl-containing alpha subunit. Pyruvate serves as cofactor. Is synthesized initially as an inactive proenzyme. Formation of the active enzyme involves a self-maturation process in which the active site pyruvoyl group is generated from an internal serine residue via an autocatalytic post-translational modification. Two non-identical subunits are generated from the proenzyme in this reaction, and the pyruvate is formed at the N-terminus of the alpha chain, which is derived from the carboxyl end of the proenzyme. The post-translation cleavage follows an unusual pathway, termed non-hydrolytic serinolysis, in which the side chain hydroxyl group of the serine supplies its oxygen atom to form the C-terminus of the beta chain, while the remainder of the serine residue undergoes an oxidative deamination to produce ammonia and the pyruvoyl prosthetic group on the alpha chain.

It localises to the cell membrane. The catalysed reaction is a 1,2-diacyl-sn-glycero-3-phospho-L-serine + H(+) = a 1,2-diacyl-sn-glycero-3-phosphoethanolamine + CO2. The protein operates within phospholipid metabolism; phosphatidylethanolamine biosynthesis; phosphatidylethanolamine from CDP-diacylglycerol: step 2/2. Functionally, catalyzes the formation of phosphatidylethanolamine (PtdEtn) from phosphatidylserine (PtdSer). The sequence is that of Phosphatidylserine decarboxylase proenzyme from Cereibacter sphaeroides (strain ATCC 17023 / DSM 158 / JCM 6121 / CCUG 31486 / LMG 2827 / NBRC 12203 / NCIMB 8253 / ATH 2.4.1.) (Rhodobacter sphaeroides).